A 39-amino-acid polypeptide reads, in one-letter code: Photosystem I reaction center subunit IX (39 aa).

Residues 7-27 (FLTTAPVAFILFSSFVFALFI) traverse the membrane as a helical segment.

It belongs to the PsaJ family.

The protein resides in the cellular thylakoid membrane. In terms of biological role, may help in the organization of the PsaE and PsaF subunits. This Synechococcus sp. (strain JA-2-3B'a(2-13)) (Cyanobacteria bacterium Yellowstone B-Prime) protein is Photosystem I reaction center subunit IX.